The sequence spans 185 residues: Lipid A acyltransferase PagP (185 aa).

Positions 1-14 are cleaved as a signal peptide; sequence MKLKPVLYLLMLLG. Residue C15 is the site of N-palmitoyl cysteine attachment. A lipid anchor (S-diacylglycerol cysteine) is attached at C15. Catalysis depends on residues H57, D100, and S101.

This sequence belongs to the lipid A palmitoyltransferase family. Homodimer.

It is found in the cell outer membrane. The enzyme catalyses a lipid A + a 1,2-diacyl-sn-glycero-3-phosphocholine = a hepta-acyl lipid A + a 2-acyl-sn-glycero-3-phosphocholine. It carries out the reaction a lipid IVA + a 1,2-diacyl-sn-glycero-3-phosphocholine = a lipid IVB + a 2-acyl-sn-glycero-3-phosphocholine. It catalyses the reaction a lipid IIA + a 1,2-diacyl-sn-glycero-3-phosphocholine = a lipid IIB + a 2-acyl-sn-glycero-3-phosphocholine. Transfers a fatty acid residue from the sn-1 position of a phospholipid to the N-linked hydroxyfatty acid chain on the proximal unit of lipid A or its precursors. The sequence is that of Lipid A acyltransferase PagP from Erwinia pyrifoliae (strain DSM 12163 / CIP 106111 / Ep16/96).